Reading from the N-terminus, the 339-residue chain is Senescence-specific cysteine protease SAG39 (339 aa).

A signal peptide spans 1–23 (MAMAKALLFAILGCLCLCSAVLA). Disulfide bonds link Cys144–Cys187, Cys178–Cys220, and Cys276–Cys328. The active site involves Cys147. Catalysis depends on residues His282 and Asn303.

It belongs to the peptidase C1 family.

Its subcellular location is the vacuole. Cysteine protease that may have a developmental senescence specific cell death function during apoptosis, heavy metal detoxification, and hypersensitive response. In Oryza sativa subsp. indica (Rice), this protein is Senescence-specific cysteine protease SAG39.